A 155-amino-acid polypeptide reads, in one-letter code: Protein SprT-like (155 aa).

The 139-residue stretch at 7–145 (QQHMEEVSLQ…GSCGGRLKQT (139 aa)) folds into the SprT-like domain. His-67 contacts Zn(2+). Glu-68 is an active-site residue. Residue His-71 coordinates Zn(2+).

It belongs to the SprT family. Requires Zn(2+) as cofactor.

It is found in the cytoplasm. This chain is Protein SprT-like, found in Listeria innocua serovar 6a (strain ATCC BAA-680 / CLIP 11262).